Reading from the N-terminus, the 484-residue chain is Poly(A) RNA polymerase GLD2 (484 aa).

A phosphoserine mark is found at Ser62 and Ser69. Residues Lys76–Arg92 carry the Nuclear localization signal motif. Ser95 is modified (phosphoserine). Mg(2+) is bound by residues Asp213 and Asp215. The PAP-associated domain occupies Ser386–Asn440.

It belongs to the DNA polymerase type-B-like family. GLD2 subfamily. Interacts with CPEB1, CPEB2, CPSF1 and PABPC1. Interacts with QKI isoform QKI7; promoting recruitment to miRNA miR-122 and miR-122 stabilization. Mg(2+) is required as a cofactor. The cofactor is Mn(2+).

Its subcellular location is the cytoplasm. The protein resides in the nucleus. The catalysed reaction is RNA(n) + ATP = RNA(n)-3'-adenine ribonucleotide + diphosphate. In terms of biological role, cytoplasmic poly(A) RNA polymerase that adds successive AMP monomers to the 3'-end of specific RNAs, forming a poly(A) tail. In contrast to the canonical nuclear poly(A) RNA polymerase, it only adds poly(A) to selected cytoplasmic mRNAs. Does not play a role in replication-dependent histone mRNA degradation. Adds a single nucleotide to the 3' end of specific miRNAs, monoadenylation stabilizes and prolongs the activity of some but not all miRNAs. This Rattus norvegicus (Rat) protein is Poly(A) RNA polymerase GLD2.